We begin with the raw amino-acid sequence, 303 residues long: Glyceraldehyde-3-phosphate dehydrogenase (303 aa).

Residues 6 to 7, Asp28, Arg72, and Thr114 each bind NAD(+); that span reads RI. D-glyceraldehyde 3-phosphate-binding positions include 143-145, Thr174, 203-204, and Arg226; these read SCT and TG. Residue Cys144 is the Nucleophile of the active site.

This sequence belongs to the glyceraldehyde-3-phosphate dehydrogenase family. As to quaternary structure, homotetramer.

It localises to the cytoplasm. The enzyme catalyses D-glyceraldehyde 3-phosphate + phosphate + NAD(+) = (2R)-3-phospho-glyceroyl phosphate + NADH + H(+). The protein operates within carbohydrate degradation; glycolysis; pyruvate from D-glyceraldehyde 3-phosphate: step 1/5. Its function is as follows. Catalyzes the oxidative phosphorylation of glyceraldehyde 3-phosphate (G3P) to 1,3-bisphosphoglycerate (BPG) using the cofactor NAD. The first reaction step involves the formation of a hemiacetal intermediate between G3P and a cysteine residue, and this hemiacetal intermediate is then oxidized to a thioester, with concomitant reduction of NAD to NADH. The reduced NADH is then exchanged with the second NAD, and the thioester is attacked by a nucleophilic inorganic phosphate to produce BPG. The polypeptide is Glyceraldehyde-3-phosphate dehydrogenase (gap) (Klebsiella pneumoniae).